The following is a 106-amino-acid chain: Immunity protein CdiI (106 aa).

In terms of assembly, forms a contact-dependent growth inhibition complex of CdiA-CT-NC101, CdiI-NC101 and EF-Tu; the complex is a dimer of heterotrimers.

In terms of biological role, immunity protein component of a toxin-immunity protein module, which functions as a cellular contact-dependent growth inhibition (CDI) system. CDI modules allow bacteria to communicate with and inhibit the growth of closely related neighboring bacteria in a contact-dependent fashion. Neutralizes the toxic activity of cognate toxin CdiA-NC101 (the C-terminal 154 residue CT fragment). Does not inhibit toxic activity of CdiA from other toxin-immunity modules or strains of E.coli. Mediates dimerization of the ternary CdiA-CT-NC101, CdiI-NC101 and EF-Tu complex; both CdiI molecules contact both EF-Tu molecules. This chain is Immunity protein CdiI, found in Escherichia coli (strain NC101).